Consider the following 504-residue polypeptide: Maturase K (504 aa).

The protein belongs to the intron maturase 2 family. MatK subfamily.

It is found in the plastid. The protein localises to the chloroplast. Functionally, usually encoded in the trnK tRNA gene intron. Probably assists in splicing its own and other chloroplast group II introns. The polypeptide is Maturase K (Adenostoma fasciculatum (Chamise)).